Reading from the N-terminus, the 450-residue chain is Bifunctional protein GlmU (450 aa).

The tract at residues 1–229 (MRRHAIILAA…VEEIMGVNDR (229 aa)) is pyrophosphorylase. Residues 8–11 (LAAG), lysine 22, glutamine 72, and 77–78 (GT) contribute to the UDP-N-acetyl-alpha-D-glucosamine site. Aspartate 102 is a Mg(2+) binding site. Positions 139, 154, and 227 each coordinate UDP-N-acetyl-alpha-D-glucosamine. Asparagine 227 is a binding site for Mg(2+). The segment at 230 to 250 (VMLSQAEKAMQRRTNHYHMLN) is linker. The interval 251-450 (GVTIIDPDST…RQTTKEGYRK (200 aa)) is N-acetyltransferase. 2 residues coordinate UDP-N-acetyl-alpha-D-glucosamine: arginine 332 and lysine 350. Histidine 362 (proton acceptor) is an active-site residue. UDP-N-acetyl-alpha-D-glucosamine is bound by residues tyrosine 365 and asparagine 376. Acetyl-CoA contacts are provided by residues 385–386 (NY), alanine 422, and arginine 439.

It in the N-terminal section; belongs to the N-acetylglucosamine-1-phosphate uridyltransferase family. This sequence in the C-terminal section; belongs to the transferase hexapeptide repeat family. As to quaternary structure, homotrimer. Mg(2+) is required as a cofactor.

It localises to the cytoplasm. It catalyses the reaction alpha-D-glucosamine 1-phosphate + acetyl-CoA = N-acetyl-alpha-D-glucosamine 1-phosphate + CoA + H(+). The catalysed reaction is N-acetyl-alpha-D-glucosamine 1-phosphate + UTP + H(+) = UDP-N-acetyl-alpha-D-glucosamine + diphosphate. It functions in the pathway nucleotide-sugar biosynthesis; UDP-N-acetyl-alpha-D-glucosamine biosynthesis; N-acetyl-alpha-D-glucosamine 1-phosphate from alpha-D-glucosamine 6-phosphate (route II): step 2/2. It participates in nucleotide-sugar biosynthesis; UDP-N-acetyl-alpha-D-glucosamine biosynthesis; UDP-N-acetyl-alpha-D-glucosamine from N-acetyl-alpha-D-glucosamine 1-phosphate: step 1/1. Its pathway is bacterial outer membrane biogenesis; LPS lipid A biosynthesis. In terms of biological role, catalyzes the last two sequential reactions in the de novo biosynthetic pathway for UDP-N-acetylglucosamine (UDP-GlcNAc). The C-terminal domain catalyzes the transfer of acetyl group from acetyl coenzyme A to glucosamine-1-phosphate (GlcN-1-P) to produce N-acetylglucosamine-1-phosphate (GlcNAc-1-P), which is converted into UDP-GlcNAc by the transfer of uridine 5-monophosphate (from uridine 5-triphosphate), a reaction catalyzed by the N-terminal domain. This is Bifunctional protein GlmU from Staphylococcus aureus (strain NCTC 8325 / PS 47).